A 572-amino-acid polypeptide reads, in one-letter code: Arginine--tRNA ligase (572 aa).

The 'HIGH' region signature appears at 122–132 (PNLAKEMHVGH).

It belongs to the class-I aminoacyl-tRNA synthetase family. In terms of assembly, monomer.

The protein localises to the cytoplasm. It carries out the reaction tRNA(Arg) + L-arginine + ATP = L-arginyl-tRNA(Arg) + AMP + diphosphate. The sequence is that of Arginine--tRNA ligase from Neisseria meningitidis serogroup B (strain ATCC BAA-335 / MC58).